Reading from the N-terminus, the 144-residue chain is Large ribosomal subunit protein uL16 (144 aa).

Residues 1-14 show a composition bias toward basic residues; sequence MLTPKRVKHRKQHR. Residues 1-22 form a disordered region; the sequence is MLTPKRVKHRKQHRPSLAGKAN.

This sequence belongs to the universal ribosomal protein uL16 family. In terms of assembly, part of the 50S ribosomal subunit.

Functionally, binds 23S rRNA and is also seen to make contacts with the A and possibly P site tRNAs. The sequence is that of Large ribosomal subunit protein uL16 from Syntrophomonas wolfei subsp. wolfei (strain DSM 2245B / Goettingen).